The chain runs to 97 residues: Ice-structuring protein (97 aa).

A signal peptide spans 1 to 23 (MALSLFTVGQLIFLFWTLRITEA). Positions 24 to 48 (NPDPAAKAAPAAVADPAAAAAAAVA) are cleaved as a propeptide — removed by a dipeptidylpeptidase.

It belongs to the type-I AFP family. In terms of tissue distribution, detected in blood serum (at protein level).

The protein localises to the secreted. Contributes to protect fish blood from freezing at subzero sea water temperatures. Lowers the blood freezing point. Binds to nascent ice crystals and prevents further growth. This is Ice-structuring protein from Myzopsetta ferruginea (Yellowtail flounder).